Reading from the N-terminus, the 137-residue chain is Large ribosomal subunit protein uL16 (137 aa).

The protein belongs to the universal ribosomal protein uL16 family. Part of the 50S ribosomal subunit.

Binds 23S rRNA and is also seen to make contacts with the A and possibly P site tRNAs. This Nitrobacter hamburgensis (strain DSM 10229 / NCIMB 13809 / X14) protein is Large ribosomal subunit protein uL16.